Reading from the N-terminus, the 839-residue chain is Small conductance calcium-activated potassium channel protein 2 (839 aa).

4 disordered regions span residues 1 to 33 (MPIV…QESP), 64 to 115 (QRGF…QQPG), 195 to 258 (ALRQ…RRES), and 280 to 375 (SNLS…KKNQ). Low complexity-rich tracts occupy residues 198 to 212 (QQYA…QYHQ) and 219 to 235 (ATSP…GPPL). A compositionally biased stretch (basic residues) spans 236–253 (SHHHHHPHPAHHQHHQPQ). Over residues 313 to 326 (SSPSAAAAASSSAP) the composition is skewed to low complexity. A compositionally biased stretch (gly residues) spans 345–363 (GTGGGGSTGGGGGGSGHGS). The helical transmembrane segment at 398–418 (ALIFGMFGIVVMVIETELSWG) threads the bilayer. Tyr420 carries the post-translational modification Phosphotyrosine. The chain crosses the membrane as a helical span at residues 428–448 (LALKCLISLSTIILLGLIIVY). A helical transmembrane segment spans residues 474–494 (IFFICLEILVCAIHPIPGNYT). Residues 516-536 (IILSIPMFLRLYLIARVMLLH) form a helical membrane-spanning segment. The helical transmembrane segment at 565–585 (LMTICPGTVLLVFSISLWIIA) threads the bilayer. An intramembrane region (pore-forming) is located at residues 605 to 625 (FLGAMWLISITFLSIGYGDMV). Residues 634-654 (VCLLTGIMGAGCTALVVAVVA) traverse the membrane as a helical segment. Residues 672 to 748 (DTQLTKRVKN…LVDLAKTQNI (77 aa)) form a calmodulin-binding region. A compositionally biased stretch (basic and acidic residues) spans 810 to 819 (HVSYNAERSR). The segment at 810-839 (HVSYNAERSRSSSRRRRSSSTAPPTSSESS) is disordered. Over residues 828–839 (SSTAPPTSSESS) the composition is skewed to low complexity.

Belongs to the potassium channel KCNN family. KCa2.2/KCNN2 subfamily. In terms of assembly, homodimer. Heteromultimer with KCNN1 and KCNN3. The complex is composed of 4 channel subunits each of which binds to a calmodulin subunit which regulates the channel activity through calcium-binding. Interacts (via N-terminal domain) with MPP2. Expressed in atrial and ventricular myocytes with higher levels in atrial myocytes (at protein level). Highly expressed in brain, liver and colon with low levels in kidney and testis. In colon, detected in smooth muscle cells.

It localises to the membrane. The protein localises to the cytoplasm. Its subcellular location is the myofibril. The protein resides in the sarcomere. It is found in the z line. It carries out the reaction K(+)(in) = K(+)(out). Inhibited by bee venom neurotoxin apamin. Inhibited by UCL 1684 and tetraethylammonium (TEA). Functionally, small conductance calcium-activated potassium channel that mediates the voltage-independent transmembrane transfer of potassium across the cell membrane through a constitutive interaction with calmodulin which binds the intracellular calcium allowing its opening. The current is characterized by a voltage-independent activation, an intracellular calcium concentration increase-dependent activation and a single-channel conductance of about 3 picosiemens. Also presents an inwardly rectifying current, thus reducing its already small outward conductance of potassium ions, which is particularly the case when the membrane potential displays positive values, above + 20 mV. The inward rectification could be due to a blockade of the outward current by intracellular divalent cations such as calcium and magnesium and could also be due to an intrinsic property of the channel pore, independent of intracellular divalent ions. There are three positively charged amino acids in the S6 transmembrane domain, close to the pore, that collectively control the conductance and rectification through an electrostatic mechanism. Additionally, electrostatic contributions from these residues also play an important role in determining the intrinsic open probability of the channel in the absence of calcium, affecting the apparent calcium affinity for activation. Forms an heteromeric complex with calmodulin, which is constitutively associated in a calcium-independent manner. Channel opening is triggered when calcium binds the calmodulin resulting in a rotary movement leading to the formation of the dimeric complex to open the gate. Plays a role in the repolarization phase of cardiac action potential. This is Small conductance calcium-activated potassium channel protein 2 from Mus musculus (Mouse).